We begin with the raw amino-acid sequence, 675 residues long: uncharacterized protein (675 aa).

This is an uncharacterized protein from Homo sapiens (Human).